Here is a 686-residue protein sequence, read N- to C-terminus: Methionine--tRNA ligase (686 aa).

The 'HIGH' region motif lies at 15–25 (PYANGSIHLGH). Positions 146, 149, 159, and 162 each coordinate Zn(2+). The short motif at 332-336 (KMSKS) is the 'KMSKS' region element. Residue K335 participates in ATP binding. The 102-residue stretch at 585–686 (AFEAVDMRIA…EGAQPGMRVM (102 aa)) folds into the tRNA-binding domain.

This sequence belongs to the class-I aminoacyl-tRNA synthetase family. MetG type 1 subfamily. As to quaternary structure, homodimer. Requires Zn(2+) as cofactor.

It is found in the cytoplasm. The enzyme catalyses tRNA(Met) + L-methionine + ATP = L-methionyl-tRNA(Met) + AMP + diphosphate. Functionally, is required not only for elongation of protein synthesis but also for the initiation of all mRNA translation through initiator tRNA(fMet) aminoacylation. The polypeptide is Methionine--tRNA ligase (Aliivibrio fischeri (strain ATCC 700601 / ES114) (Vibrio fischeri)).